Here is a 422-residue protein sequence, read N- to C-terminus: Replication factor C large subunit (422 aa).

63–70 contacts ATP; that stretch reads GPPGIGKT.

It belongs to the activator 1 small subunits family. RfcL subfamily. As to quaternary structure, heteromultimer composed of small subunits (RfcS) and large subunits (RfcL).

Functionally, part of the RFC clamp loader complex which loads the PCNA sliding clamp onto DNA. The polypeptide is Replication factor C large subunit (Pyrobaculum neutrophilum (strain DSM 2338 / JCM 9278 / NBRC 100436 / V24Sta) (Thermoproteus neutrophilus)).